Reading from the N-terminus, the 426-residue chain is MSVSLSAASHLLCSSTRVSLSPAVTSSSSSPVVALSSSTSPHSLGSVASSSLFPHSSFVLQKKHPINGTSTRMISPKCAASDAAQLISAKEDIKVLLRTKFCHPILVRLGWHDAGTYNKNIEEWPLRGGANGSLRFEAELKHAANAGLLNALKLIQPLKDKYPNISYADLFQLASATAIEEAGGPDIPMKYGRVDVVAPEQCPEEGRLPDAGPPSPADHLRDVFYRMGLDDKEIVALSGAHTLGRARPDRSGWGKPETKYTKTGPGEAGGQSWTVKWLKFDNSYFKDIKEKRDDDLLVLPTDAALFEDPSFKNYAEKYAEDVAAFFKDYAEAHAKLSNLGAKFDPPEGIVIENVPEKFVAAKYSTGKKELSDSMKKKIRAEYEAIGGSPDKPLPTNYFLNIIIAIGVLVLLSTLFGGNNNSDFSGF.

H112 acts as the Proton acceptor in catalysis. H241 is a binding site for heme b. T242 lines the K(+) pocket. Residues 245 to 269 are disordered; the sequence is RARPDRSGWGKPETKYTKTGPGEAG. A compositionally biased stretch (basic and acidic residues) spans 246–260; sequence ARPDRSGWGKPETKY. K(+)-binding residues include T274 and D281. Residues 397–417 form a helical membrane-spanning segment; it reads YFLNIIIAIGVLVLLSTLFGG.

Belongs to the peroxidase family. Ascorbate peroxidase subfamily. The cofactor is heme b.

It is found in the plastid. Its subcellular location is the chloroplast thylakoid membrane. It carries out the reaction L-ascorbate + H2O2 = L-dehydroascorbate + 2 H2O. Its function is as follows. Plays a key role in hydrogen peroxide removal. The protein is L-ascorbate peroxidase T, chloroplastic (APXT) of Arabidopsis thaliana (Mouse-ear cress).